Reading from the N-terminus, the 852-residue chain is MEIAAKMVKVRKMEMILLLILVIVVAATAANVTYDHRALVIDGKRKVLISGSIHYPRSTPEMWPELIQKSKDGGLDVIETYVFWSGHEPEKNKYNFEGRYDLVKFVKLAAKAGLYVHLRIGPYVCAEWNYGGFPVWLHFVPGIKFRTDNEPFKEEMQRFTTKIVDLMKQEKLYASQGGPIILSQIENEYGNIDSAYGAAAKSYIKWSASMALSLDTGVPWNMCQQTDAPDPMINTCNGFYCDQFTPNSNNKPKMWTENWSGWFLGFGDPSPYRPVEDLAFAVARFYQRGGTFQNYYMYHGGTNFDRTSGGPLISTSYDYDAPIDEYGLLRQPKWGHLRDLHKAIKLCEDALIATDPTITSLGSNLEAAVYKTESGSCAAFLANVDTKSDATVTFNGKSYNLPAWSVSILPDCKNVAFNTAKINSATESTAFARQSLKPDGGSSAELGSQWSYIKEPIGISKADAFLKPGLLEQINTTADKSDYLWYSLRTDIKGDETFLDEGSKAVLHIESLGQVVYAFINGKLAGSGHGKQKISLDIPINLVTGTNTIDLLSVTVGLANYGAFFDLVGAGITGPVTLKSAKGGSSIDLASQQWTYQVGLKGEDTGLATVDSSEWVSKSPLPTKQPLIWYKTTFDAPSGSEPVAIDFTGTGKGIAWVNGQSIGRYWPTSIAGNGGCTESCDYRGSYRANKCLKNCGKPSQTLYHVPRSWLKPSGNILVLFEEMGGDPTQISFATKQTGSNLCLTVSQSHPPPVDTWTSDSKISNRNRTRPVLSLKCPISTQVIFSIKFASFGTPKGTCGSFTQGHCNSSRSLSLVQKACIGLRSCNVEVSTRVFGEPCRGVVKSLAVEASCS.

An N-terminal signal peptide occupies residues methionine 1–alanine 29. Asparagine 31 carries N-linked (GlcNAc...) asparagine glycosylation. Glutamate 188 (proton donor) is an active-site residue. Glutamate 257 acts as the Nucleophile in catalysis. Asparagine 258, asparagine 475, asparagine 766, and asparagine 807 each carry an N-linked (GlcNAc...) asparagine glycan. In terms of domain architecture, SUEL-type lectin spans asparagine 766–serine 852.

The protein belongs to the glycosyl hydrolase 35 family. In terms of tissue distribution, expressed in roots, flowers and siliques.

It is found in the secreted. It localises to the extracellular space. Its subcellular location is the apoplast. It carries out the reaction Hydrolysis of terminal non-reducing beta-D-galactose residues in beta-D-galactosides.. This Arabidopsis thaliana (Mouse-ear cress) protein is Beta-galactosidase 8 (BGAL8).